We begin with the raw amino-acid sequence, 718 residues long: Manganese-exporting P-type ATPase (718 aa).

In terms of domain architecture, HMA spans 11–78 (GRMRVKVDWV…AIKGAAHVAA (68 aa)). A run of 6 helical transmembrane segments spans residues 87–105 (HSAE…GGVA), 128–146 (TVAT…RGAL), 154–168 (AGTD…VASL), 177–191 (LTVL…YLQD), 327–351 (VGEN…LITG), and 357–375 (MTML…TPTA). The 4-aspartylphosphate intermediate role is filled by aspartate 408. Positions 408, 410, and 610 each coordinate Mg(2+). The next 2 membrane-spanning stretches (helical) occupy residues 661 to 680 (AVDV…AAGL) and 690 to 709 (PVLA…ANSS).

Belongs to the cation transport ATPase (P-type) (TC 3.A.3) family. Type IB subfamily.

The protein resides in the cell membrane. It carries out the reaction Mn(2+)(in) + ATP + H2O = Mn(2+)(out) + ADP + phosphate + H(+). Its function is as follows. High affinity, slow turnover Mn(2+) transporting ATPase. This is Manganese-exporting P-type ATPase (ctpC) from Mycobacterium bovis (strain ATCC BAA-935 / AF2122/97).